Consider the following 693-residue polypeptide: Elongation factor G (693 aa).

The tr-type G domain occupies 8–282 (EKTRNIGIMA…AVIDYLPSPL (275 aa)). Residues 17-24 (AHVDAGKT), 81-85 (DTPGH), and 135-138 (NKMD) each bind GTP.

This sequence belongs to the TRAFAC class translation factor GTPase superfamily. Classic translation factor GTPase family. EF-G/EF-2 subfamily.

The protein resides in the cytoplasm. Catalyzes the GTP-dependent ribosomal translocation step during translation elongation. During this step, the ribosome changes from the pre-translocational (PRE) to the post-translocational (POST) state as the newly formed A-site-bound peptidyl-tRNA and P-site-bound deacylated tRNA move to the P and E sites, respectively. Catalyzes the coordinated movement of the two tRNA molecules, the mRNA and conformational changes in the ribosome. The protein is Elongation factor G of Streptococcus pneumoniae (strain P1031).